The primary structure comprises 883 residues: Phosphoenolpyruvate carboxylase (883 aa).

Catalysis depends on residues His138 and Lys546.

Belongs to the PEPCase type 1 family. Mg(2+) is required as a cofactor.

The catalysed reaction is oxaloacetate + phosphate = phosphoenolpyruvate + hydrogencarbonate. In terms of biological role, forms oxaloacetate, a four-carbon dicarboxylic acid source for the tricarboxylic acid cycle. The polypeptide is Phosphoenolpyruvate carboxylase (Shigella dysenteriae serotype 1 (strain Sd197)).